The primary structure comprises 302 residues: tRNA pseudouridine synthase B (302 aa).

Residue D45 is the Nucleophile of the active site.

It belongs to the pseudouridine synthase TruB family. Type 1 subfamily.

The catalysed reaction is uridine(55) in tRNA = pseudouridine(55) in tRNA. Responsible for synthesis of pseudouridine from uracil-55 in the psi GC loop of transfer RNAs. This chain is tRNA pseudouridine synthase B, found in Francisella tularensis subsp. tularensis (strain WY96-3418).